A 416-amino-acid polypeptide reads, in one-letter code: Gamma-glutamyl phosphate reductase (416 aa).

The protein belongs to the gamma-glutamyl phosphate reductase family.

Its subcellular location is the cytoplasm. The enzyme catalyses L-glutamate 5-semialdehyde + phosphate + NADP(+) = L-glutamyl 5-phosphate + NADPH + H(+). It functions in the pathway amino-acid biosynthesis; L-proline biosynthesis; L-glutamate 5-semialdehyde from L-glutamate: step 2/2. Catalyzes the NADPH-dependent reduction of L-glutamate 5-phosphate into L-glutamate 5-semialdehyde and phosphate. The product spontaneously undergoes cyclization to form 1-pyrroline-5-carboxylate. The chain is Gamma-glutamyl phosphate reductase from Streptococcus thermophilus.